Here is a 122-residue protein sequence, read N- to C-terminus: S-adenosylmethionine decarboxylase proenzyme (122 aa).

The active-site Schiff-base intermediate with substrate; via pyruvic acid is Ser63. Ser63 is subject to Pyruvic acid (Ser); by autocatalysis. His68 serves as the catalytic Proton acceptor; for processing activity. Cys83 (proton donor; for catalytic activity) is an active-site residue.

This sequence belongs to the prokaryotic AdoMetDC family. Type 1 subfamily. In terms of assembly, heterotetramer of two alpha and two beta chains arranged as a dimer of alpha/beta heterodimers. Pyruvate is required as a cofactor. In terms of processing, is synthesized initially as an inactive proenzyme. Formation of the active enzyme involves a self-maturation process in which the active site pyruvoyl group is generated from an internal serine residue via an autocatalytic post-translational modification. Two non-identical subunits are generated from the proenzyme in this reaction, and the pyruvate is formed at the N-terminus of the alpha chain, which is derived from the carboxyl end of the proenzyme. The post-translation cleavage follows an unusual pathway, termed non-hydrolytic serinolysis, in which the side chain hydroxyl group of the serine supplies its oxygen atom to form the C-terminus of the beta chain, while the remainder of the serine residue undergoes an oxidative deamination to produce ammonia and the pyruvoyl group blocking the N-terminus of the alpha chain.

The enzyme catalyses S-adenosyl-L-methionine + H(+) = S-adenosyl 3-(methylsulfanyl)propylamine + CO2. It participates in amine and polyamine biosynthesis; S-adenosylmethioninamine biosynthesis; S-adenosylmethioninamine from S-adenosyl-L-methionine: step 1/1. Catalyzes the decarboxylation of S-adenosylmethionine to S-adenosylmethioninamine (dcAdoMet), the propylamine donor required for the synthesis of the polyamines spermine and spermidine from the diamine putrescine. This is S-adenosylmethionine decarboxylase proenzyme from Methanococcus vannielii (strain ATCC 35089 / DSM 1224 / JCM 13029 / OCM 148 / SB).